The chain runs to 280 residues: MLSKAHAKVNLSLDVIGKRKDGYHLLKMLMQTIDLYDLIEIKKIKKGIIIDCDREYIPKDRRNLAYKAAELFLDRYNIDSGVRIDITKNIPVAAGLAGGSTDAATVLKIMRDIFRPDISNEELKEIALDIGADVPFCIEGGTALCEGIGEKITPIKNFKNQILVLVKPNFGLSTKDVYNNLKVEKIYIHPNTTKLIQSIEEDNLKSVARNMRNVLENVTLRKYKALNSIKSNFIELGALGSMMSGSGPSVFGLFDDMLKAQICYDNMKEKYKEVFITRTI.

Lys8 is an active-site residue. An ATP-binding site is contributed by 91 to 101 (PVAAGLAGGST). Residue Asp133 is part of the active site.

It belongs to the GHMP kinase family. IspE subfamily.

The catalysed reaction is 4-CDP-2-C-methyl-D-erythritol + ATP = 4-CDP-2-C-methyl-D-erythritol 2-phosphate + ADP + H(+). It functions in the pathway isoprenoid biosynthesis; isopentenyl diphosphate biosynthesis via DXP pathway; isopentenyl diphosphate from 1-deoxy-D-xylulose 5-phosphate: step 3/6. In terms of biological role, catalyzes the phosphorylation of the position 2 hydroxy group of 4-diphosphocytidyl-2C-methyl-D-erythritol. This is 4-diphosphocytidyl-2-C-methyl-D-erythritol kinase from Clostridium botulinum (strain 657 / Type Ba4).